The sequence spans 146 residues: Aspartate carbamoyltransferase regulatory chain (146 aa).

4 residues coordinate Zn(2+): Cys102, Cys107, Cys131, and Cys134.

It belongs to the PyrI family. In terms of assembly, contains catalytic and regulatory chains. Zn(2+) is required as a cofactor.

Its function is as follows. Involved in allosteric regulation of aspartate carbamoyltransferase. This Clostridium botulinum (strain Okra / Type B1) protein is Aspartate carbamoyltransferase regulatory chain.